We begin with the raw amino-acid sequence, 217 residues long: Probable GTP-binding protein EngB (217 aa).

An EngB-type G domain is found at 27-201 (EGIEVAFAGR…REKLDTWFSE (175 aa)). Residues 35-42 (GRSNAGKS), 62-66 (GRTQL), 80-83 (DLPG), 147-150 (TKAD), and 180-182 (FSS) each bind GTP. Residues S42 and T64 each coordinate Mg(2+).

Belongs to the TRAFAC class TrmE-Era-EngA-EngB-Septin-like GTPase superfamily. EngB GTPase family. Mg(2+) is required as a cofactor.

In terms of biological role, necessary for normal cell division and for the maintenance of normal septation. The sequence is that of Probable GTP-binding protein EngB from Yersinia enterocolitica serotype O:8 / biotype 1B (strain NCTC 13174 / 8081).